The following is a 358-amino-acid chain: Src kinase-associated phosphoprotein 2 (358 aa).

Residues Ser5 and Ser9 each carry the phosphoserine modification. The homodimerization stretch occupies residues 14 to 64 (PEEIRNLLADVETFVADTLKGENLSKKAKEKRESLIKKIKDVKSVYLQEFQ). A Phosphotyrosine modification is found at Tyr75. Phosphoserine occurs at positions 87 and 90. The PH domain occupies 116 to 219 (FVIKAGYLEK…WVQQLKFILQ (104 aa)). 2 positions are modified to phosphotyrosine: Tyr151 and Tyr197. Ser223 is subject to Phosphoserine. The interval 232–292 (ERGELYDDVD…RDSVHHTSGD (61 aa)) is disordered. The segment covering 255–270 (IDDEIYEELPEEEEDT) has biased composition (acidic residues). Tyr260 carries the phosphotyrosine; by FYN modification. 3 positions are modified to phosphoserine: Ser272, Ser282, and Ser285. Basic and acidic residues predominate over residues 274–292 (KMDEQGKGSRDSVHHTSGD). The SH3 domain occupies 296-357 (DYANFYQGLW…PKAYLMEMYD (62 aa)).

This sequence belongs to the SKAP family. In terms of assembly, interacts with LAT, GRB2, PTK2B and PRAM1. Homodimer. Interacts with FYB1, which is required for SKAP2 protein stability. Interacts with PTPNS1. Part of a complex consisting of SKAP2, FYB1 and PTPNS1. Part of a complex consisting of SKAP2, FYB1 and PIRB. May interact with actin. May interact with FYN, HCK and LYN. Interacts with FASLG. Dephosphorylated on Tyr-75 by PTPN22. Phosphorylated by FYN on Tyr-260. In case of infection with Y.pseudotuberculosis, dephosphorylated by bacterial phosphatase yopH. Expressed in kidney, lung, liver, spleen, bone marrow and testis. Present in T-cells, B-cells, and all cells of the myelomonocytic lineage. Present in all brain regions, with highest levels in neurons from the Purkinje cell layer, hippocampal gyrus, cortex and substantia nigra (at protein level).

Its subcellular location is the cytoplasm. Functionally, may be involved in B-cell and macrophage adhesion processes. In B-cells, may act by coupling the B-cell receptor (BCR) to integrin activation. May play a role in src signaling pathway. The polypeptide is Src kinase-associated phosphoprotein 2 (Skap2) (Mus musculus (Mouse)).